The sequence spans 449 residues: MRSQWLKNRKNDKTPTQMYYAKNGIITEEMRYVAKIEQMDAEILRSEVARGKTIIPANINHTNLVPMGIGRSLKCKINSNIGSSSVSSGVEEEVEKLKISIKYGADTVMDLSTGGDLNEIRTQIIKNSTVPIGTVPIYQIIHDVGSIENLTISQMLKTIENQAIQGVSYFTIHAGFLLEFMPLVAKRKMGIVSRGGSLMATWMMKNHKENPFFTAFDEILEICAKYDVSLSLGDSLRPGCIYDASDAAQISELKILGDLARRAWTKNVQVMIEGPGHVPFNEIASNMQLERVLCDDAPFYVLGPLPTDIGAGYDHITSAIGGTMAAFSGASMLCYVTPKEHLGLPNAKDVREGIVAHKIAAHIADVALGKKGAIERDHAMSDARYNFDWNKQFELSLDPDRAKEYHDETLPQEVFKEAEFCSMCGPKFCAYKISREISKNSCEFYKECK.

Substrate is bound by residues Asn-80, Met-109, Tyr-138, His-173, 193–195 (SRG), 234–237 (DSLR), and Glu-273. His-277 is a Zn(2+) binding site. Residue Tyr-300 coordinates substrate. His-341 provides a ligand contact to Zn(2+). Residues Cys-421, Cys-424, and Cys-429 each coordinate [4Fe-4S] cluster.

Belongs to the ThiC family. As to quaternary structure, homodimer. [4Fe-4S] cluster serves as cofactor.

The enzyme catalyses 5-amino-1-(5-phospho-beta-D-ribosyl)imidazole + S-adenosyl-L-methionine = 4-amino-2-methyl-5-(phosphooxymethyl)pyrimidine + CO + 5'-deoxyadenosine + formate + L-methionine + 3 H(+). It functions in the pathway cofactor biosynthesis; thiamine diphosphate biosynthesis. In terms of biological role, catalyzes the synthesis of the hydroxymethylpyrimidine phosphate (HMP-P) moiety of thiamine from aminoimidazole ribotide (AIR) in a radical S-adenosyl-L-methionine (SAM)-dependent reaction. This Campylobacter hominis (strain ATCC BAA-381 / DSM 21671 / CCUG 45161 / LMG 19568 / NCTC 13146 / CH001A) protein is Phosphomethylpyrimidine synthase.